We begin with the raw amino-acid sequence, 370 residues long: Probable neutral protease 2 homolog ARB_03949 (370 aa).

Positions 1–19 are cleaved as a signal peptide; that stretch reads MQLVAALAALGALVAPAVA. Positions 20-188 are excised as a propeptide; that stretch reads YPHAPMNETL…SIHSRALQKR (169 aa). Disulfide bonds link Cys-196/Cys-267 and Cys-274/Cys-292. Zn(2+) is bound at residue His-316. Glu-317 is an active-site residue. Residues His-320 and Asp-331 each coordinate Zn(2+).

This sequence belongs to the peptidase M35 family. The cofactor is Zn(2+).

It localises to the secreted. It catalyses the reaction Preferential cleavage of bonds with hydrophobic residues in P1'. Also 3-Asn-|-Gln-4 and 8-Gly-|-Ser-9 bonds in insulin B chain.. In terms of biological role, probable secreted metalloprotease that shows high activities on basic nuclear substrates such as histone and protamine. May be involved in virulence. The chain is Probable neutral protease 2 homolog ARB_03949 from Arthroderma benhamiae (strain ATCC MYA-4681 / CBS 112371) (Trichophyton mentagrophytes).